The following is a 315-amino-acid chain: L-lactate dehydrogenase (315 aa).

Residues Val16, Asp37, and 81 to 82 (GA) each bind NAD(+). Substrate is bound by residues Gln84, Arg90, and 122 to 125 (NPVD). NAD(+) is bound by residues 120-122 (VSN) and Ser145. Position 150–153 (150–153 (DTAR)) interacts with substrate. Beta-D-fructose 1,6-bisphosphate-binding residues include Arg155 and His170. The active-site Proton acceptor is His177. Phosphotyrosine is present on Tyr224. Position 233 (Thr233) interacts with substrate.

Belongs to the LDH/MDH superfamily. LDH family. In terms of assembly, homotetramer.

It is found in the cytoplasm. It catalyses the reaction (S)-lactate + NAD(+) = pyruvate + NADH + H(+). The protein operates within fermentation; pyruvate fermentation to lactate; (S)-lactate from pyruvate: step 1/1. Its activity is regulated as follows. Allosterically activated by fructose 1,6-bisphosphate (FBP). In terms of biological role, catalyzes the conversion of lactate to pyruvate. The sequence is that of L-lactate dehydrogenase from Treponema denticola (strain ATCC 35405 / DSM 14222 / CIP 103919 / JCM 8153 / KCTC 15104).